The chain runs to 64 residues: Large ribosomal subunit protein uL29 (64 aa).

The protein belongs to the universal ribosomal protein uL29 family.

In Verminephrobacter eiseniae (strain EF01-2), this protein is Large ribosomal subunit protein uL29.